The chain runs to 301 residues: MSKFGAMVMGPAGAGKSTFCAALITHLNLNRRSAFYINLDPAAESFEHEPDLDIKELISLKDAMEEVGLGPNGGLIYCFEFLMENLDWLTDALEGLTEEYLIIIDMPGQIELYTHVPILPALVKFLSQPGSLDVRMAAVYLLEATFVVDRAKFFSGTLSAMSAMLMLEVPHINILSKMDLVKGQVKKKDLKRFLTPDVGLLDDDPVEHTRRIAEGQDAEDDESKAPDEKDQVMKGASFRRLNRAVAGLIESFSMINYHKLDVTNEDSVAAILSYIDDCIQFHEAQDPKEPHDDEETEEFEG.

13 to 18 lines the GTP pocket; it reads GAGKST. The Gly-Pro-Asn (GPN)-loop; involved in dimer interface signature appears at 70-72; that stretch reads GPN. 176-179 contributes to the GTP binding site; sequence SKMD. The interval 212–232 is disordered; the sequence is IAEGQDAEDDESKAPDEKDQV. Positions 223 to 232 are enriched in basic and acidic residues; that stretch reads SKAPDEKDQV.

This sequence belongs to the GPN-loop GTPase family. In terms of assembly, heterodimers with GPN1 or GPN2. Binds to RNA polymerase II (RNAPII).

Small GTPase required for proper nuclear import of RNA polymerase II and III (RNAPII and RNAPIII). May act at an RNAP assembly step prior to nuclear import. The protein is GPN-loop GTPase 3 of Gibberella zeae (strain ATCC MYA-4620 / CBS 123657 / FGSC 9075 / NRRL 31084 / PH-1) (Wheat head blight fungus).